We begin with the raw amino-acid sequence, 306 residues long: UDP-3-O-acyl-N-acetylglucosamine deacetylase (306 aa).

H79, H238, and D242 together coordinate Zn(2+). H265 serves as the catalytic Proton donor.

Belongs to the LpxC family. The cofactor is Zn(2+).

It catalyses the reaction a UDP-3-O-[(3R)-3-hydroxyacyl]-N-acetyl-alpha-D-glucosamine + H2O = a UDP-3-O-[(3R)-3-hydroxyacyl]-alpha-D-glucosamine + acetate. Its pathway is glycolipid biosynthesis; lipid IV(A) biosynthesis; lipid IV(A) from (3R)-3-hydroxytetradecanoyl-[acyl-carrier-protein] and UDP-N-acetyl-alpha-D-glucosamine: step 2/6. Functionally, catalyzes the hydrolysis of UDP-3-O-myristoyl-N-acetylglucosamine to form UDP-3-O-myristoylglucosamine and acetate, the committed step in lipid A biosynthesis. This chain is UDP-3-O-acyl-N-acetylglucosamine deacetylase, found in Shewanella pealeana (strain ATCC 700345 / ANG-SQ1).